Here is a 329-residue protein sequence, read N- to C-terminus: Gibberellin 2-beta-dioxygenase 1 (329 aa).

Positions 165-273 (NTDSILRLNH…RVSMIYFAGP (109 aa)) constitute a Fe2OG dioxygenase domain. Residues His-197, Asp-199, and His-254 each contribute to the Fe cation site. Arg-264 is a catalytic residue. Arg-264 lines the 2-oxoglutarate pocket.

Belongs to the iron/ascorbate-dependent oxidoreductase family. GA2OX subfamily. Requires Fe(2+) as cofactor. In terms of tissue distribution, preferentially expressed in flowers, siliques, and upper stems. Not expressed in the apex.

It carries out the reaction gibberellin A1 + 2-oxoglutarate + O2 = gibberellin A8 + succinate + CO2. The protein operates within plant hormone biosynthesis; gibberellin biosynthesis. Catalyzes the 2-beta-hydroxylation of several biologically active gibberellins, leading to the homeostatic regulation of their endogenous level. Catabolism of gibberellins (GAs) plays a central role in plant development. Converts GA9/GA20 to GA51/GA29 and GA4/GA1 to GA34/GA8. In Arabidopsis thaliana (Mouse-ear cress), this protein is Gibberellin 2-beta-dioxygenase 1 (GA2OX1).